A 370-amino-acid chain; its full sequence is Peptide chain release factor 2 (370 aa).

The residue at position 252 (Gln252) is an N5-methylglutamine.

This sequence belongs to the prokaryotic/mitochondrial release factor family. In terms of processing, methylated by PrmC. Methylation increases the termination efficiency of RF2.

It is found in the cytoplasm. Its function is as follows. Peptide chain release factor 2 directs the termination of translation in response to the peptide chain termination codons UGA and UAA. This chain is Peptide chain release factor 2, found in Mycobacterium avium (strain 104).